We begin with the raw amino-acid sequence, 114 residues long: Ig heavy chain V-A2 region BS-1 (114 aa).

Q1 is modified (pyrrolidone carboxylic acid). An Ig-like domain is found at 1-107; sequence QSVKESEGGL…YLGLMDVWGP (107 aa).

The protein is Ig heavy chain V-A2 region BS-1 of Oryctolagus cuniculus (Rabbit).